The sequence spans 529 residues: Bifunctional purine biosynthesis protein PurH (529 aa).

One can recognise an MGS-like domain in the interval Thr2–Thr149.

This sequence belongs to the PurH family.

It carries out the reaction (6R)-10-formyltetrahydrofolate + 5-amino-1-(5-phospho-beta-D-ribosyl)imidazole-4-carboxamide = 5-formamido-1-(5-phospho-D-ribosyl)imidazole-4-carboxamide + (6S)-5,6,7,8-tetrahydrofolate. The enzyme catalyses IMP + H2O = 5-formamido-1-(5-phospho-D-ribosyl)imidazole-4-carboxamide. It functions in the pathway purine metabolism; IMP biosynthesis via de novo pathway; 5-formamido-1-(5-phospho-D-ribosyl)imidazole-4-carboxamide from 5-amino-1-(5-phospho-D-ribosyl)imidazole-4-carboxamide (10-formyl THF route): step 1/1. Its pathway is purine metabolism; IMP biosynthesis via de novo pathway; IMP from 5-formamido-1-(5-phospho-D-ribosyl)imidazole-4-carboxamide: step 1/1. In Dinoroseobacter shibae (strain DSM 16493 / NCIMB 14021 / DFL 12), this protein is Bifunctional purine biosynthesis protein PurH.